A 414-amino-acid polypeptide reads, in one-letter code: Signal recognition particle receptor FtsY (414 aa).

Residues 216 to 223 (GVNGVGKT), 298 to 302 (DTAGR), and 362 to 365 (TKLD) each bind GTP.

The protein belongs to the GTP-binding SRP family. FtsY subfamily. Part of the signal recognition particle protein translocation system, which is composed of SRP and FtsY. SRP is a ribonucleoprotein composed of Ffh and a 4.5S RNA molecule.

The protein resides in the cell inner membrane. It is found in the cytoplasm. The catalysed reaction is GTP + H2O = GDP + phosphate + H(+). In terms of biological role, involved in targeting and insertion of nascent membrane proteins into the cytoplasmic membrane. Acts as a receptor for the complex formed by the signal recognition particle (SRP) and the ribosome-nascent chain (RNC). Interaction with SRP-RNC leads to the transfer of the RNC complex to the Sec translocase for insertion into the membrane, the hydrolysis of GTP by both Ffh and FtsY, and the dissociation of the SRP-FtsY complex into the individual components. The chain is Signal recognition particle receptor FtsY from Haemophilus influenzae (strain ATCC 51907 / DSM 11121 / KW20 / Rd).